Here is a 586-residue protein sequence, read N- to C-terminus: MFSLSSLSSSGGHSEQKERERISYFDIRINSPYKDIILIQGSPLELSSIPLSGNLVISVKNEIVVKKISLRLVGRFKLEFLQVGRYKKNSSSLASLVKEKRKIFECYWDNLLVSSKGDVLVGGENAENQHNSSSGRSTSNQDMDTSGNAIFLSKRSLSSPVFNKIIRRKTHSSHRKILELPENGVTGTPFEGLRENARSRSSSSNTLNNNSHSYSNRDGSGSSYLFLMKRGNYELPFNTMLPPEVCETIEGLQSGSILYSFEAIIDGRQLWDTDLSVHTSPHGPIGSTSTSGNGMRTKNKIIIKKFKYLRILRTLSMDNLAMQEEISVGNTWRDKLQYETSIPSRAVPIGSTTPVKIKIFPFEKNIRLDRIEMALIQYYAMKDSSAQIYDDEIAVMKITHLADFGPLTDKLDVDCPFTIPDNLKQITQDCCLQDNLIRVMHKLQVRILLQRQVDGEYKNLEIKAQLPMLLFISPHLPMKGRLVLFDKHDGKIHFRPGELVPLFLTTYPAQGLTPGVELNSTTTAHLALPQPPPNYHESTNDHLMPALQPLGADSVVLTVPSYEQAQAQASASSYVTGSVPAYCDDD.

Disordered stretches follow at residues 123–145 (GENA…DMDT) and 182–217 (ENGV…YSNR). A compositionally biased stretch (polar residues) spans 126–145 (AENQHNSSSGRSTSNQDMDT). Positions 199–216 (SRSSSSNTLNNNSHSYSN) are enriched in low complexity. Residue K364 forms a Glycyl lysine isopeptide (Lys-Gly) (interchain with G-Cter in ubiquitin) linkage.

The protein belongs to the arrestin family. Interacts with RSP5. Post-translationally, ubiquitinated by RSP5.

In terms of biological role, may regulate endocytosis by recruiting RSP5 ubiquitin ligase activity to specific plasma membrane proteins in response to extracellular stimuli. This chain is Arrestin-related trafficking adapter 5 (ART5), found in Saccharomyces cerevisiae (strain ATCC 204508 / S288c) (Baker's yeast).